Here is a 676-residue protein sequence, read N- to C-terminus: MTRDDKFPIVYSLLLIVLLFVSPIYGDGDADALLKFKSSLVNASSLGGWDSGEPPCSGDKGSDSKWKGVMCSNGSVFALRLENMSLSGELDVQALGSIRGLKSISFMRNHFEGKIPRGIDGLVSLAHLYLAHNQFTGEIDGDLFSGMKALLKVHLEGNRFSGEIPESLGKLPKLTELNLEDNMFTGKIPAFKQKNLVTVNVANNQLEGRIPLTLGLMNITFFSGNKGLCGAPLLPCRYTRPPFFTVFLLALTILAVVVLITVFLSVCILSRRQGKGQDQIQNHGVGHFHGQVYGQPEQQQHSEKSSQDSKVYRKLANETVQRDSTATSGAISVGGLSPDEDKRGDQRKLHFVRNDQERFTLQDMLRASAEVLGSGGFGSSYKAALSSGRAVVVKRFRFMSNIGREEFYDHMKKIGRLSHPNLLPLIAFYYRKEEKLLVTNYISNGSLANLLHANRTPGQVVLDWPIRLKIVRGVTRGLAYLYRVFPDLNLPHGHLKSSNVLLDPNFEPLLTDYALVPVVNRDQSQQFMVAYKAPEFTQQDRTSRRSDVWSLGILILEILTGKFPANYLRQGKGADDELAAWVESVARTEWTADVFDKEMKAGKEHEAQMLKLLKIGLRCCDWDIEKRIELHEAVDRIEEVDRDAGGGQESVRSSYVTASDGDHRSSRAMTEEFSLM.

The signal sequence occupies residues 1–26; sequence MTRDDKFPIVYSLLLIVLLFVSPIYG. Over 27–242 the chain is Extracellular; it reads DGDADALLKF…LLPCRYTRPP (216 aa). Residues Asn42, Asn73, and Asn83 are each glycosylated (N-linked (GlcNAc...) asparagine). 5 LRR repeats span residues 98 to 122, 123 to 146, 148 to 171, 172 to 195, and 197 to 218; these read IRGL…IDGL, VSLA…LFSG, KALL…LGKL, PKLT…KQKN, and VTVN…GLMN. The N-linked (GlcNAc...) asparagine glycan is linked to Asn218. Residues 243–263 form a helical membrane-spanning segment; sequence FFTVFLLALTILAVVVLITVF. Over 264 to 676 the chain is Cytoplasmic; that stretch reads LSVCILSRRQ…RAMTEEFSLM (413 aa). Over residues 319–330 the composition is skewed to polar residues; it reads TVQRDSTATSGA. The tract at residues 319–347 is disordered; it reads TVQRDSTATSGAISVGGLSPDEDKRGDQR. The Protein kinase domain occupies 366–640; it reads RASAEVLGSG…HEAVDRIEEV (275 aa). Position 368 is a phosphoserine (Ser368). ATP-binding positions include 372–380 and Lys394; that span reads LGSGGFGSS. Phosphoserine occurs at positions 446 and 543. The tract at residues 641-676 is disordered; that stretch reads DRDAGGGQESVRSSYVTASDGDHRSSRAMTEEFSLM.

The protein belongs to the protein kinase superfamily. Ser/Thr protein kinase family.

It is found in the membrane. It catalyses the reaction L-seryl-[protein] + ATP = O-phospho-L-seryl-[protein] + ADP + H(+). It carries out the reaction L-threonyl-[protein] + ATP = O-phospho-L-threonyl-[protein] + ADP + H(+). The protein is Probable LRR receptor-like serine/threonine-protein kinase At4g31250 of Arabidopsis thaliana (Mouse-ear cress).